The following is a 190-amino-acid chain: Potassium-transporting ATPase KdpC subunit (190 aa).

A helical transmembrane segment spans residues 7–27 (PALLMLLVWTLITGVFYPVLV).

It belongs to the KdpC family. As to quaternary structure, the system is composed of three essential subunits: KdpA, KdpB and KdpC.

It is found in the cell inner membrane. Part of the high-affinity ATP-driven potassium transport (or Kdp) system, which catalyzes the hydrolysis of ATP coupled with the electrogenic transport of potassium into the cytoplasm. This subunit acts as a catalytic chaperone that increases the ATP-binding affinity of the ATP-hydrolyzing subunit KdpB by the formation of a transient KdpB/KdpC/ATP ternary complex. This Methylococcus capsulatus (strain ATCC 33009 / NCIMB 11132 / Bath) protein is Potassium-transporting ATPase KdpC subunit.